A 367-amino-acid chain; its full sequence is 3-dehydroquinate synthase (367 aa).

Residues 69–74, 103–107, 127–128, lysine 140, lysine 149, and 167–170 contribute to the NAD(+) site; these read DGESHK, GVIGD, TT, and TLAT. 3 residues coordinate Zn(2+): glutamate 182, histidine 245, and histidine 262.

This sequence belongs to the sugar phosphate cyclases superfamily. Dehydroquinate synthase family. Co(2+) serves as cofactor. It depends on Zn(2+) as a cofactor. The cofactor is NAD(+).

The protein localises to the cytoplasm. The catalysed reaction is 7-phospho-2-dehydro-3-deoxy-D-arabino-heptonate = 3-dehydroquinate + phosphate. Its pathway is metabolic intermediate biosynthesis; chorismate biosynthesis; chorismate from D-erythrose 4-phosphate and phosphoenolpyruvate: step 2/7. Functionally, catalyzes the conversion of 3-deoxy-D-arabino-heptulosonate 7-phosphate (DAHP) to dehydroquinate (DHQ). This Stutzerimonas stutzeri (strain A1501) (Pseudomonas stutzeri) protein is 3-dehydroquinate synthase.